The sequence spans 67 residues: Small, acid-soluble spore protein B (67 aa).

It belongs to the alpha/beta-type SASP family.

SASP are bound to spore DNA. They are double-stranded DNA-binding proteins that cause DNA to change to an a-like conformation. They protect the DNA backbone from chemical and enzymatic cleavage and are thus involved in dormant spore's high resistance to UV light. In Bacillus subtilis (strain 168), this protein is Small, acid-soluble spore protein B (sspB).